The sequence spans 1131 residues: Major DNA-binding protein (1131 aa).

Residues 790 to 791 (FW) carry the Required for filament formation motif. Residues 1112–1131 (LKCEETEHENEEPSLKKARL) form a required for nuclear localization region.

This sequence belongs to the herpesviridae major DNA-binding protein family. In terms of assembly, homooligomers. Forms double-helical filaments necessary for the formation of replication compartments within the host nucleus. Interacts with the origin-binding protein. Interacts with the helicase primase complex; this interaction stimulates primer synthesis activity of the helicase-primase complex. Interacts with the DNA polymerase. Interacts with the alkaline exonuclease; this interaction increases its nuclease processivity.

The protein localises to the host nucleus. Single-stranded DNA-binding protein required for DNA replication. Its function is as follows. Plays several crucial roles in viral infection. Participates in the opening of the viral DNA origin to initiate replication by interacting with the origin-binding protein. May disrupt loops, hairpins and other secondary structures present on ssDNA to reduce and eliminate pausing of viral DNA polymerase at specific sites during elongation. Promotes viral DNA recombination by performing strand-transfer, characterized by the ability to transfer a DNA strand from a linear duplex to a complementary single-stranded DNA circle. Can also catalyze the renaturation of complementary single strands. Additionally, reorganizes the host cell nucleus, leading to the formation of prereplicative sites and replication compartments. This process is driven by the protein which can form double-helical filaments in the absence of DNA. This chain is Major DNA-binding protein, found in Human herpesvirus 7 (strain JI) (HHV-7).